The sequence spans 465 residues: Ribulose bisphosphate carboxylase large chain (465 aa).

N6,N6,N6-trimethyllysine is present on K4. The substrate site is built by N113 and T163. K165 acts as the Proton acceptor in catalysis. A substrate-binding site is contributed by K167. Residues K191, D193, and E194 each contribute to the Mg(2+) site. The residue at position 191 (K191) is an N6-carboxylysine. H284 acts as the Proton acceptor in catalysis. Residues R285, H317, and S369 each coordinate substrate.

Belongs to the RuBisCO large chain family. Type I subfamily. As to quaternary structure, heterohexadecamer of 8 large chains and 8 small chains; disulfide-linked. The disulfide link is formed within the large subunit homodimers. Mg(2+) serves as cofactor. Post-translationally, the disulfide bond which can form in the large chain dimeric partners within the hexadecamer appears to be associated with oxidative stress and protein turnover.

The protein localises to the plastid. Its subcellular location is the chloroplast. It catalyses the reaction 2 (2R)-3-phosphoglycerate + 2 H(+) = D-ribulose 1,5-bisphosphate + CO2 + H2O. The enzyme catalyses D-ribulose 1,5-bisphosphate + O2 = 2-phosphoglycolate + (2R)-3-phosphoglycerate + 2 H(+). Its function is as follows. RuBisCO catalyzes two reactions: the carboxylation of D-ribulose 1,5-bisphosphate, the primary event in carbon dioxide fixation, as well as the oxidative fragmentation of the pentose substrate in the photorespiration process. Both reactions occur simultaneously and in competition at the same active site. This Morella cerifera (Wax myrtle) protein is Ribulose bisphosphate carboxylase large chain.